A 527-amino-acid chain; its full sequence is Probable T-complex protein 1 subunit beta (527 aa).

Belongs to the TCP-1 chaperonin family. As to quaternary structure, heterooligomeric complex of about 850 to 900 kDa that forms two stacked rings, 12 to 16 nm in diameter.

The protein resides in the cytoplasm. Functionally, molecular chaperone; assists the folding of proteins upon ATP hydrolysis. Known to play a role, in vitro, in the folding of actin and tubulin. The chain is Probable T-complex protein 1 subunit beta (cct2) from Schizosaccharomyces pombe (strain 972 / ATCC 24843) (Fission yeast).